A 1140-amino-acid chain; its full sequence is uncharacterized protein (1140 aa).

Disordered regions lie at residues 1–49 (MGSS…TSPE), 97–243 (SSDI…STIS), 280–427 (TSSS…KSSV), 512–541 (ASSTLGSKVSSSNSRMATSKTSSTSSDLSK), 702–747 (FSTP…STAS), 916–1059 (CPEK…PIGR), and 1080–1103 (LSSSTEKVNRSTTKPTAAIHGTSS). The segment covering 105-129 (VNDVESSTSGPSNSYSALSSTNAQL) has biased composition (polar residues). 3 stretches are compositionally biased toward low complexity: residues 130 to 154 (SSSTTETDSISSSAIQTSSPQTSSS), 172 to 214 (TTAS…TTSD), and 221 to 243 (SSSTSDVSSLLSSTSSPASSTIS). Residues 516-528 (LGSKVSSSNSRMA) show a composition bias toward polar residues. 2 stretches are compositionally biased toward low complexity: residues 529-541 (TSKTSSTSSDLSK) and 703-718 (STPESSPTTSTLVTSE). The segment covering 719–733 (APSTVSSMTTSAPFI) has biased composition (polar residues). The span at 734–747 (NNSTSARPSPSTAS) shows a compositional bias: low complexity. Residues 949–961 (SFKDMKTSQETKK) show a composition bias toward basic and acidic residues. Over residues 977–997 (EKTSPTTKASPSTSPSESKAA) the composition is skewed to low complexity. 3 stretches are compositionally biased toward polar residues: residues 998–1023 (GNTSVATNASPSTSPSESQGTGSTSV), 1031–1055 (TKNSEGVSTTKAKNTSTVAKSSTES), and 1089–1103 (RSTTKPTAAIHGTSS).

This is an uncharacterized protein from Saccharomyces cerevisiae (strain ATCC 204508 / S288c) (Baker's yeast).